A 311-amino-acid chain; its full sequence is MVDHQWTPLQKEVISGLSAGSVTTLVVHPLDLLKVRLQLSATSAQKAHYGPFMVIKEIIRSSANSGRSVTNELYRGLSINLFGNAIAWGVYFGLYGVTKELIYKSVAKPGETQLKGVGNDHKMNSLIYLSAGASSGLMTAILTNPIWVIKTRIMSTSKGAQGAYTSMYNGVQQLLRTDGFQGLWKGLVPALFGVSQGALYFAVYDTLKQRKLRRKRENGLDIHLTNLETIEITSLGKMVSVTLVYPFQLLKSNLQSFRANEQKFRLFPLIKLIIANDGFVGLYKGLSANLVRAIPSTCITFCVYENLKHRL.

Solcar repeat units lie at residues 7–101, 123–210, and 224–310; these read TPLQ…TKEL, MNSL…LKQR, and LTNL…LKHR. Transmembrane regions (helical) follow at residues 13 to 33, 77 to 97, 129 to 149, 183 to 203, 230 to 250, and 266 to 286; these read VISG…LDLL, LSIN…LYGV, LSAG…IWVI, LWKG…YFAV, IEIT…FQLL, and LFPL…YKGL.

The protein belongs to the mitochondrial carrier (TC 2.A.29) family.

The protein localises to the mitochondrion inner membrane. Functionally, transport of FAD from the cytosol to the mitochondrial matrix. This chain is Mitochondrial FAD carrier protein FLX1 (FLX1), found in Saccharomyces cerevisiae (strain ATCC 204508 / S288c) (Baker's yeast).